A 328-amino-acid chain; its full sequence is GMP reductase (328 aa).

Cysteine 176 functions as the Thioimidate intermediate in the catalytic mechanism. 205-228 (IIADGGIRTHGDIAKSIRFGASMI) provides a ligand contact to NADP(+).

This sequence belongs to the IMPDH/GMPR family. GuaC type 2 subfamily.

The catalysed reaction is IMP + NH4(+) + NADP(+) = GMP + NADPH + 2 H(+). Its function is as follows. Catalyzes the irreversible NADPH-dependent deamination of GMP to IMP. It functions in the conversion of nucleobase, nucleoside and nucleotide derivatives of G to A nucleotides, and in maintaining the intracellular balance of A and G nucleotides. This Streptococcus pneumoniae (strain P1031) protein is GMP reductase.